The following is a 485-amino-acid chain: Glutamyl-tRNA(Gln) amidotransferase subunit A (485 aa).

Active-site charge relay system residues include Lys-78 and Ser-153. Ser-177 serves as the catalytic Acyl-ester intermediate.

This sequence belongs to the amidase family. GatA subfamily. In terms of assembly, heterotrimer of A, B and C subunits.

The catalysed reaction is L-glutamyl-tRNA(Gln) + L-glutamine + ATP + H2O = L-glutaminyl-tRNA(Gln) + L-glutamate + ADP + phosphate + H(+). In terms of biological role, allows the formation of correctly charged Gln-tRNA(Gln) through the transamidation of misacylated Glu-tRNA(Gln) in organisms which lack glutaminyl-tRNA synthetase. The reaction takes place in the presence of glutamine and ATP through an activated gamma-phospho-Glu-tRNA(Gln). This chain is Glutamyl-tRNA(Gln) amidotransferase subunit A, found in Bacillus cereus (strain ATCC 10987 / NRS 248).